A 396-amino-acid chain; its full sequence is Methionine import ATP-binding protein MetN 2 (396 aa).

The 240-residue stretch at 41-280 folds into the ABC transporter domain; that stretch reads VSFELVGKVF…PRHGATRALL (240 aa). 77-84 is a binding site for ATP; the sequence is GRSGAGKS.

Belongs to the ABC transporter superfamily. Methionine importer (TC 3.A.1.24) family. In terms of assembly, the complex is composed of two ATP-binding proteins (MetN), two transmembrane proteins (MetI) and a solute-binding protein (MetQ).

The protein resides in the cell inner membrane. The catalysed reaction is L-methionine(out) + ATP + H2O = L-methionine(in) + ADP + phosphate + H(+). It catalyses the reaction D-methionine(out) + ATP + H2O = D-methionine(in) + ADP + phosphate + H(+). Functionally, part of the ABC transporter complex MetNIQ involved in methionine import. Responsible for energy coupling to the transport system. This is Methionine import ATP-binding protein MetN 2 from Burkholderia mallei (strain ATCC 23344).